Here is a 316-residue protein sequence, read N- to C-terminus: tRNA dimethylallyltransferase (316 aa).

Residue G17 to T24 participates in ATP binding. T19 to T24 serves as a coordination point for substrate. 4 interaction with substrate tRNA regions span residues D42–L45, Q166–R170, R247–R252, and K280–R287.

This sequence belongs to the IPP transferase family. In terms of assembly, monomer. Mg(2+) is required as a cofactor.

It carries out the reaction adenosine(37) in tRNA + dimethylallyl diphosphate = N(6)-dimethylallyladenosine(37) in tRNA + diphosphate. Functionally, catalyzes the transfer of a dimethylallyl group onto the adenine at position 37 in tRNAs that read codons beginning with uridine, leading to the formation of N6-(dimethylallyl)adenosine (i(6)A). In Escherichia coli O127:H6 (strain E2348/69 / EPEC), this protein is tRNA dimethylallyltransferase.